Consider the following 856-residue polypeptide: DNA mismatch repair protein MutS (856 aa).

An ATP-binding site is contributed by 609 to 616; the sequence is GPNMSGKS.

This sequence belongs to the DNA mismatch repair MutS family.

In terms of biological role, this protein is involved in the repair of mismatches in DNA. It is possible that it carries out the mismatch recognition step. This protein has a weak ATPase activity. This is DNA mismatch repair protein MutS from Finegoldia magna (strain ATCC 29328 / DSM 20472 / WAL 2508) (Peptostreptococcus magnus).